A 243-amino-acid chain; its full sequence is MPNFWALPPEINSTRIYLGPGSGPILAAAQGWNALASELEKTKVGLQSALDTLLESYRGQSSQALIQQTLPYVQWLTTTAEHAHKTAIQLTAAANAYEQARAAMVPPAMVRANRVQTTVLKAINWFGQFSTRIADKEADYEQMWFQDALVMENYWEAVQEAIQSTSHFEDPPEMADDYDEAWMLNTVFDYHNENAKEEVIHLVPDVNKERGPIELVTKVDKEGTIRLVYDGEPTFSYKEHPKF.

The protein belongs to the mycobacterial PPE family.

It is found in the cell membrane. This is an uncharacterized protein from Mycobacterium tuberculosis (strain CDC 1551 / Oshkosh).